A 320-amino-acid chain; its full sequence is MLLCFRFGNQSMKRENFTLITDFVFQGFSSFHEQQITLFGVFLALYILTLAGNIIIVTIIRMDLHLHTPMYFFLSMLSTSETVYTLVILPRMLSSLVGMSQPISLAGCATQMFFFVTFGITNCFLLTAMGYDRYVAICNPLRYMVIMNKRLRIQLVLGACSIGLIVAITQVTSVFRLPFCARKVPHFFCDIRPVMKLSCIDTTVNEILTLIISVLVLVVPMGLVFISYVLIISTILKIASVEGRKKAFATCASHLTVVIVHYSCASIAYLKPKSENTREHDQLISVTYTVITPLLNPVVYTLRNKEVKDALCRAVGGKFS.

Residues 1–36 (MLLCFRFGNQSMKRENFTLITDFVFQGFSSFHEQQI) lie on the Extracellular side of the membrane. N-linked (GlcNAc...) asparagine glycans are attached at residues Asn-9 and Asn-16. The chain crosses the membrane as a helical span at residues 37–57 (TLFGVFLALYILTLAGNIIIV). Residues 58 to 65 (TIIRMDLH) lie on the Cytoplasmic side of the membrane. Residues 66-86 (LHTPMYFFLSMLSTSETVYTL) traverse the membrane as a helical segment. The Extracellular segment spans residues 87–110 (VILPRMLSSLVGMSQPISLAGCAT). Cys-108 and Cys-199 are disulfide-bonded. Residues 111–131 (QMFFFVTFGITNCFLLTAMGY) form a helical membrane-spanning segment. Residues 132 to 150 (DRYVAICNPLRYMVIMNKR) lie on the Cytoplasmic side of the membrane. Residues 151–171 (LRIQLVLGACSIGLIVAITQV) form a helical membrane-spanning segment. Residues 172 to 207 (TSVFRLPFCARKVPHFFCDIRPVMKLSCIDTTVNEI) are Extracellular-facing. The helical transmembrane segment at 208–227 (LTLIISVLVLVVPMGLVFIS) threads the bilayer. Residues 228 to 247 (YVLIISTILKIASVEGRKKA) are Cytoplasmic-facing. The chain crosses the membrane as a helical span at residues 248-268 (FATCASHLTVVIVHYSCASIA). The Extracellular portion of the chain corresponds to 269–281 (YLKPKSENTREHD). The helical transmembrane segment at 282–302 (QLISVTYTVITPLLNPVVYTL) threads the bilayer. Over 303-320 (RNKEVKDALCRAVGGKFS) the chain is Cytoplasmic.

It belongs to the G-protein coupled receptor 1 family.

It localises to the cell membrane. Odorant receptor. This Homo sapiens (Human) protein is Olfactory receptor 10J1 (OR10J1).